Here is a 364-residue protein sequence, read N- to C-terminus: Dual-specificity RNA methyltransferase RlmN (364 aa).

Glutamate 91 functions as the Proton acceptor in the catalytic mechanism. Residues 97-333 form the Radical SAM core domain; the sequence is ESDRGTLCIS…VTVRKTRGDD (237 aa). Cysteines 104 and 338 form a disulfide. [4Fe-4S] cluster is bound by residues cysteine 111, cysteine 115, and cysteine 118. Residues 164–165, serine 196, 218–220, and asparagine 295 contribute to the S-adenosyl-L-methionine site; these read GE and SLH. The S-methylcysteine intermediate role is filled by cysteine 338.

The protein belongs to the radical SAM superfamily. RlmN family. The cofactor is [4Fe-4S] cluster.

The protein localises to the cytoplasm. The enzyme catalyses adenosine(2503) in 23S rRNA + 2 reduced [2Fe-2S]-[ferredoxin] + 2 S-adenosyl-L-methionine = 2-methyladenosine(2503) in 23S rRNA + 5'-deoxyadenosine + L-methionine + 2 oxidized [2Fe-2S]-[ferredoxin] + S-adenosyl-L-homocysteine. It carries out the reaction adenosine(37) in tRNA + 2 reduced [2Fe-2S]-[ferredoxin] + 2 S-adenosyl-L-methionine = 2-methyladenosine(37) in tRNA + 5'-deoxyadenosine + L-methionine + 2 oxidized [2Fe-2S]-[ferredoxin] + S-adenosyl-L-homocysteine. Functionally, specifically methylates position 2 of adenine 2503 in 23S rRNA and position 2 of adenine 37 in tRNAs. m2A2503 modification seems to play a crucial role in the proofreading step occurring at the peptidyl transferase center and thus would serve to optimize ribosomal fidelity. The chain is Dual-specificity RNA methyltransferase RlmN from Neisseria meningitidis serogroup A / serotype 4A (strain DSM 15465 / Z2491).